Consider the following 420-residue polypeptide: ATP phosphoribosyltransferase regulatory subunit (420 aa).

Belongs to the class-II aminoacyl-tRNA synthetase family. HisZ subfamily. Heteromultimer composed of HisG and HisZ subunits.

The protein localises to the cytoplasm. The protein operates within amino-acid biosynthesis; L-histidine biosynthesis; L-histidine from 5-phospho-alpha-D-ribose 1-diphosphate: step 1/9. In terms of biological role, required for the first step of histidine biosynthesis. May allow the feedback regulation of ATP phosphoribosyltransferase activity by histidine. This Bacillus cereus (strain AH820) protein is ATP phosphoribosyltransferase regulatory subunit.